The following is a 102-amino-acid chain: 10 kDa heat shock protein, mitochondrial (102 aa).

Ala-2 bears the N-acetylalanine mark. Lys-8 is subject to N6-acetyllysine. Lys-28 carries the post-translational modification N6-succinyllysine. Residue Lys-40 is modified to N6-acetyllysine; alternate. N6-malonyllysine; alternate occurs at positions 40, 54, and 56. 5 positions are modified to N6-succinyllysine; alternate: Lys-40, Lys-54, Lys-56, Lys-66, and Lys-70. N6-acetyllysine; alternate occurs at positions 56, 66, and 70. Residue Thr-79 is modified to Phosphothreonine. Residues Lys-80 and Lys-86 each carry the N6-acetyllysine; alternate modification. An N6-succinyllysine; alternate mark is found at Lys-80 and Lys-86. Lys-99 carries the post-translational modification N6-acetyllysine.

Belongs to the GroES chaperonin family. In terms of assembly, homoheptamer arranged in a ring structure. 2 heptameric Hsp10 rings interact with a Hsp60 tetradecamer in the structure of a back-to-back double heptameric ring to form the symmetrical football complex.

It is found in the mitochondrion matrix. Co-chaperonin implicated in mitochondrial protein import and macromolecular assembly. Together with Hsp60, facilitates the correct folding of imported proteins. May also prevent misfolding and promote the refolding and proper assembly of unfolded polypeptides generated under stress conditions in the mitochondrial matrix. The functional units of these chaperonins consist of heptameric rings of the large subunit Hsp60, which function as a back-to-back double ring. In a cyclic reaction, Hsp60 ring complexes bind one unfolded substrate protein per ring, followed by the binding of ATP and association with 2 heptameric rings of the co-chaperonin Hsp10. This leads to sequestration of the substrate protein in the inner cavity of Hsp60 where, for a certain period of time, it can fold undisturbed by other cell components. Synchronous hydrolysis of ATP in all Hsp60 subunits results in the dissociation of the chaperonin rings and the release of ADP and the folded substrate protein. This chain is 10 kDa heat shock protein, mitochondrial (HSPE1), found in Bos taurus (Bovine).